The sequence spans 520 residues: Ribonuclease Y (520 aa).

Residues Met1–Ala21 traverse the membrane as a helical segment. In terms of domain architecture, KH spans Cys210 to Ile295. An HD domain is found at Leu336–Ala429.

The protein belongs to the RNase Y family.

Its subcellular location is the cell membrane. In terms of biological role, endoribonuclease that initiates mRNA decay. In Christiangramia forsetii (strain DSM 17595 / CGMCC 1.15422 / KT0803) (Gramella forsetii), this protein is Ribonuclease Y.